We begin with the raw amino-acid sequence, 240 residues long: UDP-2,3-diacylglucosamine hydrolase (240 aa).

Residues D8, H10, D41, N79, and H114 each coordinate Mn(2+). N79–R80 serves as a coordination point for substrate. D122, S160, N164, K167, and H195 together coordinate substrate. Residues H195 and H197 each coordinate Mn(2+).

It belongs to the LpxH family. Mn(2+) is required as a cofactor.

It localises to the cell inner membrane. It catalyses the reaction UDP-2-N,3-O-bis[(3R)-3-hydroxytetradecanoyl]-alpha-D-glucosamine + H2O = 2-N,3-O-bis[(3R)-3-hydroxytetradecanoyl]-alpha-D-glucosaminyl 1-phosphate + UMP + 2 H(+). It functions in the pathway glycolipid biosynthesis; lipid IV(A) biosynthesis; lipid IV(A) from (3R)-3-hydroxytetradecanoyl-[acyl-carrier-protein] and UDP-N-acetyl-alpha-D-glucosamine: step 4/6. In terms of biological role, hydrolyzes the pyrophosphate bond of UDP-2,3-diacylglucosamine to yield 2,3-diacylglucosamine 1-phosphate (lipid X) and UMP by catalyzing the attack of water at the alpha-P atom. Involved in the biosynthesis of lipid A, a phosphorylated glycolipid that anchors the lipopolysaccharide to the outer membrane of the cell. This chain is UDP-2,3-diacylglucosamine hydrolase, found in Salmonella dublin (strain CT_02021853).